Reading from the N-terminus, the 449-residue chain is UDP-N-acetylmuramoylalanine--D-glutamate ligase (449 aa).

118-124 contributes to the ATP binding site; it reads GTNGKTT.

It belongs to the MurCDEF family.

The protein localises to the cytoplasm. It carries out the reaction UDP-N-acetyl-alpha-D-muramoyl-L-alanine + D-glutamate + ATP = UDP-N-acetyl-alpha-D-muramoyl-L-alanyl-D-glutamate + ADP + phosphate + H(+). It participates in cell wall biogenesis; peptidoglycan biosynthesis. Its function is as follows. Cell wall formation. Catalyzes the addition of glutamate to the nucleotide precursor UDP-N-acetylmuramoyl-L-alanine (UMA). The chain is UDP-N-acetylmuramoylalanine--D-glutamate ligase from Staphylococcus saprophyticus subsp. saprophyticus (strain ATCC 15305 / DSM 20229 / NCIMB 8711 / NCTC 7292 / S-41).